The primary structure comprises 603 residues: UvrABC system protein C (603 aa).

The 78-residue stretch at 15 to 92 folds into the GIY-YIG domain; that stretch reads DQPGCYLMKD…IKKHDPRFNI (78 aa). Residues 197-232 form the UVR domain; sequence KTVKNDLMKKMQVAAENMEFEKAGEFRDQINAIETT.

This sequence belongs to the UvrC family. Interacts with UvrB in an incision complex.

It localises to the cytoplasm. The UvrABC repair system catalyzes the recognition and processing of DNA lesions. UvrC both incises the 5' and 3' sides of the lesion. The N-terminal half is responsible for the 3' incision and the C-terminal half is responsible for the 5' incision. This Listeria welshimeri serovar 6b (strain ATCC 35897 / DSM 20650 / CCUG 15529 / CIP 8149 / NCTC 11857 / SLCC 5334 / V8) protein is UvrABC system protein C.